The sequence spans 726 residues: Catalase-peroxidase (726 aa).

Residues 1–33 (MSTTDDTHNTLSTGKCPFHQGGHDRSAGAGTAS) form a disordered region. Residues 105-226 (WHGAGTYRSI…LGATEMGLIY (122 aa)) constitute a cross-link (tryptophyl-tyrosyl-methioninium (Trp-Tyr) (with M-252)). His106 (proton acceptor) is an active-site residue. A cross-link (tryptophyl-tyrosyl-methioninium (Tyr-Met) (with W-105)) is located at residues 226-252 (YVNPEGPDHSGEPLSAAAAIRATFGNM). His267 contacts heme b.

Belongs to the peroxidase family. Peroxidase/catalase subfamily. Homodimer or homotetramer. Heme b is required as a cofactor. In terms of processing, formation of the three residue Trp-Tyr-Met cross-link is important for the catalase, but not the peroxidase activity of the enzyme.

It carries out the reaction H2O2 + AH2 = A + 2 H2O. The enzyme catalyses 2 H2O2 = O2 + 2 H2O. Functionally, bifunctional enzyme with both catalase and broad-spectrum peroxidase activity. The protein is Catalase-peroxidase of Salmonella heidelberg (strain SL476).